We begin with the raw amino-acid sequence, 300 residues long: tRNA dimethylallyltransferase 1 (300 aa).

10-17 is an ATP binding site; that stretch reads GPTGVGKT. 12–17 contacts substrate; the sequence is TGVGKT. The tract at residues 35–38 is interaction with substrate tRNA; it reads DSRQ.

This sequence belongs to the IPP transferase family. In terms of assembly, monomer. Mg(2+) is required as a cofactor.

It carries out the reaction adenosine(37) in tRNA + dimethylallyl diphosphate = N(6)-dimethylallyladenosine(37) in tRNA + diphosphate. In terms of biological role, catalyzes the transfer of a dimethylallyl group onto the adenine at position 37 in tRNAs that read codons beginning with uridine, leading to the formation of N6-(dimethylallyl)adenosine (i(6)A). The sequence is that of tRNA dimethylallyltransferase 1 from Phocaeicola vulgatus (strain ATCC 8482 / DSM 1447 / JCM 5826 / CCUG 4940 / NBRC 14291 / NCTC 11154) (Bacteroides vulgatus).